The chain runs to 254 residues: 5'/3'-nucleotidase SurE (254 aa).

The a divalent metal cation site is built by Asp-9, Asp-10, Ser-40, and Asn-93.

Belongs to the SurE nucleotidase family. The cofactor is a divalent metal cation.

The protein localises to the cytoplasm. It catalyses the reaction a ribonucleoside 5'-phosphate + H2O = a ribonucleoside + phosphate. The catalysed reaction is a ribonucleoside 3'-phosphate + H2O = a ribonucleoside + phosphate. The enzyme catalyses [phosphate](n) + H2O = [phosphate](n-1) + phosphate + H(+). Nucleotidase with a broad substrate specificity as it can dephosphorylate various ribo- and deoxyribonucleoside 5'-monophosphates and ribonucleoside 3'-monophosphates with highest affinity to 3'-AMP. Also hydrolyzes polyphosphate (exopolyphosphatase activity) with the preference for short-chain-length substrates (P20-25). Might be involved in the regulation of dNTP and NTP pools, and in the turnover of 3'-mononucleotides produced by numerous intracellular RNases (T1, T2, and F) during the degradation of various RNAs. The chain is 5'/3'-nucleotidase SurE from Proteus mirabilis (strain HI4320).